The chain runs to 399 residues: uncharacterized protein (399 aa).

This is an uncharacterized protein from Aquifex aeolicus (strain VF5).